The following is a 196-amino-acid chain: dITP/XTP pyrophosphatase (196 aa).

8 to 13 contributes to the substrate binding site; the sequence is TKNEGK. Residues Glu-41 and Asp-70 each coordinate Mg(2+). Residue Asp-70 is the Proton acceptor of the active site. Substrate is bound by residues Ser-71, 153–156, Lys-176, and 181–182; these read FGYD and HR.

It belongs to the HAM1 NTPase family. As to quaternary structure, homodimer. Mg(2+) serves as cofactor.

It catalyses the reaction XTP + H2O = XMP + diphosphate + H(+). The enzyme catalyses dITP + H2O = dIMP + diphosphate + H(+). It carries out the reaction ITP + H2O = IMP + diphosphate + H(+). Its function is as follows. Pyrophosphatase that catalyzes the hydrolysis of nucleoside triphosphates to their monophosphate derivatives, with a high preference for the non-canonical purine nucleotides XTP (xanthosine triphosphate), dITP (deoxyinosine triphosphate) and ITP. Seems to function as a house-cleaning enzyme that removes non-canonical purine nucleotides from the nucleotide pool, thus preventing their incorporation into DNA/RNA and avoiding chromosomal lesions. The polypeptide is dITP/XTP pyrophosphatase (Bacillus licheniformis (strain ATCC 14580 / DSM 13 / JCM 2505 / CCUG 7422 / NBRC 12200 / NCIMB 9375 / NCTC 10341 / NRRL NRS-1264 / Gibson 46)).